A 339-amino-acid chain; its full sequence is Ketol-acid reductoisomerase (NADP(+)) (339 aa).

Residues M1–T182 enclose the KARI N-terminal Rossmann domain. NADP(+) is bound by residues Y24 to Q27, K48, S51, T53, and D83 to Q86. The active site involves H108. NADP(+) is bound at residue G134. One can recognise a KARI C-terminal knotted domain in the interval N183–I328. Residues D191, E195, E227, and E231 each coordinate Mg(2+). Residue S252 participates in substrate binding.

This sequence belongs to the ketol-acid reductoisomerase family. It depends on Mg(2+) as a cofactor.

The catalysed reaction is (2R)-2,3-dihydroxy-3-methylbutanoate + NADP(+) = (2S)-2-acetolactate + NADPH + H(+). It catalyses the reaction (2R,3R)-2,3-dihydroxy-3-methylpentanoate + NADP(+) = (S)-2-ethyl-2-hydroxy-3-oxobutanoate + NADPH + H(+). Its pathway is amino-acid biosynthesis; L-isoleucine biosynthesis; L-isoleucine from 2-oxobutanoate: step 2/4. The protein operates within amino-acid biosynthesis; L-valine biosynthesis; L-valine from pyruvate: step 2/4. Functionally, involved in the biosynthesis of branched-chain amino acids (BCAA). Catalyzes an alkyl-migration followed by a ketol-acid reduction of (S)-2-acetolactate (S2AL) to yield (R)-2,3-dihydroxy-isovalerate. In the isomerase reaction, S2AL is rearranged via a Mg-dependent methyl migration to produce 3-hydroxy-3-methyl-2-ketobutyrate (HMKB). In the reductase reaction, this 2-ketoacid undergoes a metal-dependent reduction by NADPH to yield (R)-2,3-dihydroxy-isovalerate. This Rhizobium meliloti (strain 1021) (Ensifer meliloti) protein is Ketol-acid reductoisomerase (NADP(+)).